Here is a 208-residue protein sequence, read N- to C-terminus: Calaxin (208 aa).

3 consecutive EF-hand domains span residues 64-99, 100-135, and 145-180; these read TDDM…FLHG, TLEE…SLLK, and GVKD…ENLL. 13 residues coordinate Ca(2+): D77, D79, D81, D113, N115, D117, Y119, E124, D158, D160, D162, K164, and D169.

Component of the outer dynein arm-docking complex along with ODAD1, ODAD2, ODAD3 and ODAD4.

The protein localises to the cytoplasm. It localises to the cytoskeleton. It is found in the cilium axoneme. The protein resides in the cell projection. Its subcellular location is the cilium. The protein localises to the flagellum. Component of the outer dynein arm-docking complex (ODA-DC) that mediates outer dynein arms (ODA) binding onto the doublet microtubule. Seems to regulate the assembly of both ODAs and their axonemal docking complex onto ciliary microtubules. Regulates ciliary and flagellar motility and is required for cilia-driven determination of body laterality. In Xenopus laevis (African clawed frog), this protein is Calaxin (clxn).